The sequence spans 245 residues: Ribonuclease 3 (245 aa).

Positions 18-146 (LSKFLENLSI…FVGAIYLDSG (129 aa)) constitute an RNase III domain. Mg(2+) is bound at residue Glu-59. Asp-63 is a catalytic residue. Mg(2+) contacts are provided by Asp-132 and Glu-135. The active site involves Glu-135. The region spanning 173-242 (DYKSLLQEYV…AEVALKAMEN (70 aa)) is the DRBM domain.

Belongs to the ribonuclease III family. As to quaternary structure, homodimer. Mg(2+) serves as cofactor.

It is found in the cytoplasm. It catalyses the reaction Endonucleolytic cleavage to 5'-phosphomonoester.. Functionally, digests double-stranded RNA. Involved in the processing of primary rRNA transcript to yield the immediate precursors to the large and small rRNAs (23S and 16S). Processes some mRNAs, and tRNAs when they are encoded in the rRNA operon. Processes pre-crRNA and tracrRNA of type II CRISPR loci if present in the organism. This Borreliella burgdorferi (strain ATCC 35210 / DSM 4680 / CIP 102532 / B31) (Borrelia burgdorferi) protein is Ribonuclease 3.